We begin with the raw amino-acid sequence, 444 residues long: Ribulose bisphosphate carboxylase large chain (444 aa).

K7 carries the post-translational modification N6,N6,N6-trimethyllysine. The substrate site is built by N116 and T166. K168 acts as the Proton acceptor in catalysis. K170 is a binding site for substrate. Positions 194, 196, and 197 each coordinate Mg(2+). The residue at position 194 (K194) is an N6-carboxylysine. Catalysis depends on H287, which acts as the Proton acceptor. The substrate site is built by R288, H320, and S372.

Belongs to the RuBisCO large chain family. Type I subfamily. As to quaternary structure, heterohexadecamer of 8 large chains and 8 small chains; disulfide-linked. The disulfide link is formed within the large subunit homodimers. Mg(2+) serves as cofactor. The disulfide bond which can form in the large chain dimeric partners within the hexadecamer appears to be associated with oxidative stress and protein turnover.

It is found in the plastid. The protein resides in the chloroplast. The catalysed reaction is 2 (2R)-3-phosphoglycerate + 2 H(+) = D-ribulose 1,5-bisphosphate + CO2 + H2O. It carries out the reaction D-ribulose 1,5-bisphosphate + O2 = 2-phosphoglycolate + (2R)-3-phosphoglycerate + 2 H(+). In terms of biological role, ruBisCO catalyzes two reactions: the carboxylation of D-ribulose 1,5-bisphosphate, the primary event in carbon dioxide fixation, as well as the oxidative fragmentation of the pentose substrate in the photorespiration process. Both reactions occur simultaneously and in competition at the same active site. This Watsonia angusta protein is Ribulose bisphosphate carboxylase large chain.